The following is a 445-amino-acid chain: Glutamate-1-semialdehyde 2,1-aminomutase (445 aa).

At Lys263 the chain carries N6-(pyridoxal phosphate)lysine.

The protein belongs to the class-III pyridoxal-phosphate-dependent aminotransferase family. HemL subfamily. Pyridoxal 5'-phosphate serves as cofactor.

The protein localises to the cytoplasm. It carries out the reaction (S)-4-amino-5-oxopentanoate = 5-aminolevulinate. Its pathway is porphyrin-containing compound metabolism; protoporphyrin-IX biosynthesis; 5-aminolevulinate from L-glutamyl-tRNA(Glu): step 2/2. The chain is Glutamate-1-semialdehyde 2,1-aminomutase from Halorubrum lacusprofundi (strain ATCC 49239 / DSM 5036 / JCM 8891 / ACAM 34).